A 477-amino-acid chain; its full sequence is Mitochondrial adenyl nucleotide antiporter SLC25A24 (477 aa).

The segment at 1–173 (MLRWLRDFVL…RFWKHSTGID (173 aa)) is regulatory N-terminal domain. At 1–197 (MLRWLRDFVL…EKKSGQWWRQ (197 aa)) the chain is on the mitochondrial intermembrane side. EF-hand domains lie at 19–54 (EQPT…LGIP), 55–88 (LGQD…KDHE), 86–121 (DHEK…LGLT), and 122–157 (ISEQ…NPVT). Asp32, Asn34, Asp36, Val38, Glu43, Asp68, Asn70, Asp72, Lys74, Glu79, Asp99, Asn101, Asp103, Lys105, Glu110, Asp135, Asp137, Thr139, Thr141, and Glu146 together coordinate Ca(2+). The linker region stretch occupies residues 159–168 (IEEIIRFWKH). The tract at residues 174-477 (IGDSLTIPDE…MKQTLGVTQK (304 aa)) is C-terminal transmembrane transporter domain. 3 Solcar repeats span residues 192–278 (GQWW…YKKL), 286–371 (IGTF…LKSY), and 383–471 (PGVM…MKQT). A helical transmembrane segment spans residues 198–215 (LLAGGIAGAVSRTSTAPL). The Mitochondrial matrix segment spans residues 216–252 (DRLKIMMQVHGSKSDKMNIFGGFRQMVKEGGIRSLWR). The helical transmembrane segment at 253–272 (GNGTNVIKIAPETAVKFWAY) threads the bilayer. Topologically, residues 273–295 (EQYKKLLTEEGQKIGTFERFISG) are mitochondrial intermembrane. A helical transmembrane segment spans residues 296 to 309 (SMAGATAQTFIYPM). The Mitochondrial matrix segment spans residues 310-345 (EVMKTRLAVGKTGQYSGIYDCAKKILKHEGLGAFYK). The residue at position 320 (Lys320) is an N6-acetyllysine; alternate. Lys320 is modified (N6-succinyllysine; alternate). Residue Lys336 is modified to N6-acetyllysine. A helical membrane pass occupies residues 346 to 365 (GYVPNLLGIIPYAGIDLAVY). Residues 366-388 (ELLKSYWLDNFAKDSVNPGVMVL) are Mitochondrial intermembrane-facing. Residues 389 to 406 (LGCGALSSTCGQLASYPL) form a helical membrane-spanning segment. The Mitochondrial matrix segment spans residues 407 to 445 (ALVRTRMQAQAMLEGSPQLNMVGLFRRIISKEGIPGLYR). An N6-acetyllysine; alternate modification is found at Lys437. Lys437 carries the N6-succinyllysine; alternate modification. A helical membrane pass occupies residues 446-465 (GITPNFMKVLPAVGISYVVY). The Mitochondrial intermembrane portion of the chain corresponds to 466–477 (ENMKQTLGVTQK).

This sequence belongs to the mitochondrial carrier (TC 2.A.29) family. Monomer. Expressed in all tissues tested. Highly expressed in testis, expressed at intermediate level in small intestine and pancreas, and weakly expressed in kidney, spleen, liver, skeletal muscle and heart.

Its subcellular location is the mitochondrion inner membrane. The catalysed reaction is Mg(2+)(out) + phosphate(in) + ATP(out) = Mg(2+)(in) + phosphate(out) + ATP(in). It carries out the reaction ADP(out) + phosphate(in) + H(+)(out) = ADP(in) + phosphate(out) + H(+)(in). The enzyme catalyses AMP(out) + phosphate(in) = AMP(in) + phosphate(out). It catalyses the reaction phosphate(in) + ATP(out) + 2 H(+)(out) = phosphate(out) + ATP(in) + 2 H(+)(in). The catalysed reaction is dADP(in) + ADP(out) = dADP(out) + ADP(in). It carries out the reaction Mg(2+)(in) + ADP(out) + ATP(in) + H(+)(out) = Mg(2+)(out) + ADP(in) + ATP(out) + H(+)(in). The enzyme catalyses ADP(out) + diphosphate(in) = ADP(in) + diphosphate(out). It catalyses the reaction dAMP(in) + ADP(out) + H(+)(out) = dAMP(out) + ADP(in) + H(+)(in). The catalysed reaction is 3'-AMP(in) + ADP(out) + H(+)(out) = 3'-AMP(out) + ADP(in) + H(+)(in). It carries out the reaction dAMP(out) + phosphate(in) = dAMP(in) + phosphate(out). The enzyme catalyses 3'-AMP(out) + phosphate(in) = 3'-AMP(in) + phosphate(out). It catalyses the reaction dADP(out) + phosphate(in) + H(+)(out) = dADP(in) + phosphate(out) + H(+)(in). Its activity is regulated as follows. Activated by an increase in cytosolic calcium levels that induce a conformational change of the N-terminal regulatory domain, uncapping the channel and allowing transport. Inhibited by bathophenanthroline, mersalyl, p-hydroxymercuribenzoate, bromcresol purple and tannic acid. Functionally, electroneutral antiporter that mediates the transport of adenyl nucleotides through the inner mitochondrial membrane. Originally identified as an ATP-magnesium/inorganic phosphate antiporter, it also acts as a broad specificity adenyl nucleotide antiporter. By regulating the mitochondrial matrix adenyl nucleotide pool could adapt to changing cellular energetic demands and indirectly regulate adenyl nucleotide-dependent metabolic pathways. In vitro, a low activity is also observed with guanyl and pyrimidine nucleotides. May play a role in protecting cells against oxidative stress-induced cell death, by buffering calcium levels in the mitochondrial matrix through the formation of calcium-phosphate precipitates. This Homo sapiens (Human) protein is Mitochondrial adenyl nucleotide antiporter SLC25A24.